A 300-amino-acid polypeptide reads, in one-letter code: Cysteine-rich venom protein (300 aa).

A signal peptide spans 1 to 21; the sequence is MLSTMQTVGAVLMLSIVLVAG. The propeptide occupies 22–24; the sequence is RKR. An SCP domain is found at 62 to 183; sequence LEMHNKIRAD…GNNKYFVCNY (122 aa).

In terms of processing, contains 11 disulfide bonds. As to expression, expressed by the venom duct.

It is found in the secreted. Its function is as follows. Protease responsible for cleaving the conotoxins from their propeptide precursors. The target propeptide requires minimum four residues including a leucine N-terminal of the cleavage site for efficient substrate processing (example: Xaa-Xaa-Xaa-Leu-Asn-Lys-Arg-toxin). This Conus textile (Cloth-of-gold cone) protein is Cysteine-rich venom protein.